A 273-amino-acid polypeptide reads, in one-letter code: Dermonecrotic toxin LafSicTox-betaIE1 (273 aa).

Residue His5 is part of the active site. Mg(2+) contacts are provided by Glu25 and Asp27. The active-site Nucleophile is the His41. 2 cysteine pairs are disulfide-bonded: Cys45-Cys51 and Cys47-Cys189. Asp85 is a Mg(2+) binding site. Asn250 carries an N-linked (GlcNAc...) asparagine glycan.

It belongs to the arthropod phospholipase D family. Class II subfamily. The cofactor is Mg(2+). As to expression, expressed by the venom gland.

Its subcellular location is the secreted. The enzyme catalyses an N-(acyl)-sphingosylphosphocholine = an N-(acyl)-sphingosyl-1,3-cyclic phosphate + choline. The catalysed reaction is an N-(acyl)-sphingosylphosphoethanolamine = an N-(acyl)-sphingosyl-1,3-cyclic phosphate + ethanolamine. It carries out the reaction a 1-acyl-sn-glycero-3-phosphocholine = a 1-acyl-sn-glycero-2,3-cyclic phosphate + choline. It catalyses the reaction a 1-acyl-sn-glycero-3-phosphoethanolamine = a 1-acyl-sn-glycero-2,3-cyclic phosphate + ethanolamine. Dermonecrotic toxins cleave the phosphodiester linkage between the phosphate and headgroup of certain phospholipids (sphingolipid and lysolipid substrates), forming an alcohol (often choline) and a cyclic phosphate. This toxin acts on sphingomyelin (SM). It may also act on ceramide phosphoethanolamine (CPE), lysophosphatidylcholine (LPC) and lysophosphatidylethanolamine (LPE), but not on lysophosphatidylserine (LPS), and lysophosphatidylglycerol (LPG). It acts by transphosphatidylation, releasing exclusively cyclic phosphate products as second products. Induces dermonecrosis, hemolysis, increased vascular permeability, edema, inflammatory response, and platelet aggregation. This Loxosceles aff. spinulosa (strain GJB-2008) (Recluse spider) protein is Dermonecrotic toxin LafSicTox-betaIE1.